A 567-amino-acid polypeptide reads, in one-letter code: Urease subunit alpha (567 aa).

The 439-residue stretch at 129 to 567 (GGVDSHIHFI…LPLAQRYFLF (439 aa)) folds into the Urease domain. Ni(2+) is bound by residues His134, His136, and Lys217. N6-carboxylysine is present on Lys217. His219 serves as a coordination point for substrate. 2 residues coordinate Ni(2+): His246 and His272. Catalysis depends on His320, which acts as the Proton donor. Asp360 is a Ni(2+) binding site.

The protein belongs to the metallo-dependent hydrolases superfamily. Urease alpha subunit family. In terms of assembly, heterotrimer of UreA (gamma), UreB (beta) and UreC (alpha) subunits. Three heterotrimers associate to form the active enzyme. Requires Ni cation as cofactor. In terms of processing, carboxylation allows a single lysine to coordinate two nickel ions.

Its subcellular location is the cytoplasm. The catalysed reaction is urea + 2 H2O + H(+) = hydrogencarbonate + 2 NH4(+). Its pathway is nitrogen metabolism; urea degradation; CO(2) and NH(3) from urea (urease route): step 1/1. The sequence is that of Urease subunit alpha from Pseudomonas putida (strain ATCC 700007 / DSM 6899 / JCM 31910 / BCRC 17059 / LMG 24140 / F1).